We begin with the raw amino-acid sequence, 170 residues long: TFIIB-type zinc finger protein (170 aa).

Residues 1–30 form a TFIIB-type zinc finger; sequence MECPVCGSNEIVWDNKNGEVVCSNCGIIID. Zn(2+) is bound by residues Cys-3, Cys-6, Cys-22, and Cys-25.

The protein belongs to the TFIIB family. It depends on Zn(2+) as a cofactor.

The polypeptide is TFIIB-type zinc finger protein (Saccharolobus shibatae (strain ATCC 51178 / DSM 5389 / JCM 8931 / NBRC 15437 / B12) (Sulfolobus shibatae)).